We begin with the raw amino-acid sequence, 137 residues long: Probable 4-amino-4-deoxy-L-arabinose-phosphoundecaprenol flippase subunit ArnF (137 aa).

Residues 1–3 (MNA) lie on the Cytoplasmic side of the membrane. Residues 4-24 (LRGWLAALGSVLLASAAQLGM) traverse the membrane as a helical segment. The Periplasmic segment spans residues 25 to 44 (RWGMSRLPLPEAWAGQTPER). The chain crosses the membrane as a helical span at residues 45–65 (AALLAVALAVAAYAASLLCWL). Residues 66-76 (AALRHLPLGRA) lie on the Cytoplasmic side of the membrane. The helical transmembrane segment at 77–97 (YSLLSASYALVYLLAASLPAF) threads the bilayer. Residues 98–100 (DET) lie on the Periplasmic side of the membrane. The helical transmembrane segment at 101 to 121 (FSTSKTLGVGLVVLGVLTVNA) threads the bilayer. The Cytoplasmic segment spans residues 122–137 (RRTAAAPAHHPSRKAP).

The protein belongs to the ArnF family. Heterodimer of ArnE and ArnF.

The protein localises to the cell inner membrane. It participates in bacterial outer membrane biogenesis; lipopolysaccharide biosynthesis. In terms of biological role, translocates 4-amino-4-deoxy-L-arabinose-phosphoundecaprenol (alpha-L-Ara4N-phosphoundecaprenol) from the cytoplasmic to the periplasmic side of the inner membrane. The chain is Probable 4-amino-4-deoxy-L-arabinose-phosphoundecaprenol flippase subunit ArnF from Pseudomonas aeruginosa (strain ATCC 15692 / DSM 22644 / CIP 104116 / JCM 14847 / LMG 12228 / 1C / PRS 101 / PAO1).